The primary structure comprises 103 residues: Large ribosomal subunit protein bL21 (103 aa).

Belongs to the bacterial ribosomal protein bL21 family. As to quaternary structure, part of the 50S ribosomal subunit. Contacts protein L20.

This protein binds to 23S rRNA in the presence of protein L20. This chain is Large ribosomal subunit protein bL21, found in Shigella sonnei (strain Ss046).